We begin with the raw amino-acid sequence, 55 residues long: Large ribosomal subunit protein bL33 (55 aa).

This sequence belongs to the bacterial ribosomal protein bL33 family.

This chain is Large ribosomal subunit protein bL33, found in Bordetella pertussis (strain Tohama I / ATCC BAA-589 / NCTC 13251).